Consider the following 209-residue polypeptide: Bacteriorhodopsin (209 aa).

Residues 1–17 form a helical membrane-spanning segment; it reads LWLGTAGMFLGMLYFIA. The Cytoplasmic portion of the chain corresponds to 18–31; the sequence is RGWGETDGRRQKFY. A helical membrane pass occupies residues 32–50; that stretch reads IATILITAIAFVNYLAMAL. Residues 51 to 66 are Extracellular-facing; the sequence is GFGLTFIEFGGEQHPI. The chain crosses the membrane as a helical span at residues 67-84; it reads YWARYTDWLFTTPLLLYD. Topologically, residues 85–95 are cytoplasmic; sequence LGLLAGADRNT. Residues 96–115 form a helical membrane-spanning segment; the sequence is IYSLVSLDVLMIGTGVVATL. The Extracellular segment spans residues 116 to 128; the sequence is SAGSGVLSAGAER. The chain crosses the membrane as a helical span at residues 129-148; that stretch reads LVWWGISTAFLLVLLYFLFS. Residues 149 to 166 are Cytoplasmic-facing; it reads SLSGRVANLPSDTRSTFK. A helical membrane pass occupies residues 167 to 185; the sequence is TLRNLVTVVWLVYPVWWLV. Topologically, residues 186–197 are extracellular; sequence GSEGLGLVGIGI. A helical membrane pass occupies residues 198 to 209; the sequence is ETAGFMVIDLVA.

Belongs to the archaeal/bacterial/fungal opsin family.

It localises to the cell membrane. In terms of biological role, light-driven proton pump. In Halobacterium halobium (strain shark), this protein is Bacteriorhodopsin (bop).